The primary structure comprises 662 residues: Phosphomethylpyrimidine synthase (662 aa).

Residues Asn-235, Met-264, Tyr-293, His-329, 349–351, 390–393, and Glu-429 each bind substrate; these read SRG and DGMR. Residue His-433 coordinates Zn(2+). Tyr-456 is a substrate binding site. A Zn(2+)-binding site is contributed by His-497. Positions 577, 580, and 585 each coordinate [4Fe-4S] cluster.

Belongs to the ThiC family. Homodimer. It depends on [4Fe-4S] cluster as a cofactor.

It catalyses the reaction 5-amino-1-(5-phospho-beta-D-ribosyl)imidazole + S-adenosyl-L-methionine = 4-amino-2-methyl-5-(phosphooxymethyl)pyrimidine + CO + 5'-deoxyadenosine + formate + L-methionine + 3 H(+). Its pathway is cofactor biosynthesis; thiamine diphosphate biosynthesis. Catalyzes the synthesis of the hydroxymethylpyrimidine phosphate (HMP-P) moiety of thiamine from aminoimidazole ribotide (AIR) in a radical S-adenosyl-L-methionine (SAM)-dependent reaction. This chain is Phosphomethylpyrimidine synthase, found in Shewanella halifaxensis (strain HAW-EB4).